A 129-amino-acid chain; its full sequence is Glycine cleavage system H protein (129 aa).

Positions 24-106 (SYTVGITEHA…YGEGWFFRVM (83 aa)) constitute a Lipoyl-binding domain. Residue Lys-65 is modified to N6-lipoyllysine.

The protein belongs to the GcvH family. In terms of assembly, the glycine cleavage system is composed of four proteins: P, T, L and H. The cofactor is (R)-lipoate.

Its function is as follows. The glycine cleavage system catalyzes the degradation of glycine. The H protein shuttles the methylamine group of glycine from the P protein to the T protein. The protein is Glycine cleavage system H protein of Shewanella baltica (strain OS155 / ATCC BAA-1091).